The sequence spans 551 residues: Formate--tetrahydrofolate ligase (551 aa).

61 to 68 (TPAGEGKS) is a binding site for ATP.

Belongs to the formate--tetrahydrofolate ligase family.

It catalyses the reaction (6S)-5,6,7,8-tetrahydrofolate + formate + ATP = (6R)-10-formyltetrahydrofolate + ADP + phosphate. It functions in the pathway one-carbon metabolism; tetrahydrofolate interconversion. This is Formate--tetrahydrofolate ligase from Lactiplantibacillus plantarum (strain ATCC BAA-793 / NCIMB 8826 / WCFS1) (Lactobacillus plantarum).